Consider the following 209-residue polypeptide: UPF0174 protein HP_1587 (209 aa).

Belongs to the UPF0174 family.

The polypeptide is UPF0174 protein HP_1587 (Helicobacter pylori (strain ATCC 700392 / 26695) (Campylobacter pylori)).